The sequence spans 150 residues: Ribonuclease K6 (150 aa).

An N-terminal signal peptide occupies residues 1 to 23 (MVLCFPLLLLLLVLWGPVCPLHA). Catalysis depends on histidine 38, which acts as the Proton acceptor. 4 disulfide bridges follow: cysteine 46–cysteine 104, cysteine 60–cysteine 114, cysteine 78–cysteine 129, and cysteine 85–cysteine 92. N-linked (GlcNAc...) asparagine glycosylation is present at asparagine 55. Substrate contacts are provided by residues 61 to 65 (KHQNT) and lysine 86. A glycan (N-linked (GlcNAc...) asparagine) is linked at asparagine 100. Position 105 (arginine 105) interacts with substrate. Histidine 145 (proton donor) is an active-site residue.

The protein belongs to the pancreatic ribonuclease family. In terms of assembly, interacts (via N-terminus) with bacterial lipopolysaccharide (LPS).

The protein localises to the secreted. It is found in the lysosome. Its subcellular location is the cytoplasmic granule. In terms of biological role, ribonuclease which shows a preference for the pyrimidines uridine and cytosine. Has potent antibacterial activity against a range of Gram-positive and Gram-negative bacteria, including P.aeruginosa, A.baumanii, M.luteus, S.aureus, E.faecalis, E.faecium, S.saprophyticus and E.coli. Causes loss of bacterial membrane integrity, and also promotes agglutination of Gram-negative bacteria. Probably contributes to urinary tract sterility. Bactericidal activity is independent of RNase activity. The protein is Ribonuclease K6 (RNASE6) of Gorilla gorilla gorilla (Western lowland gorilla).